Reading from the N-terminus, the 572-residue chain is Putative lysozyme-like protein (572 aa).

The first 17 residues, 1-17 (MRLLLVLLALIFSVVSA), serve as a signal peptide directing secretion. Over residues 145–165 (MSSSGSSSSSGSSGSSSSSSG) the composition is skewed to low complexity. 4 disordered regions span residues 145–199 (MSSS…HGGG), 231–297 (SSSS…GGGV), 326–388 (ANSV…GERK), and 433–469 (AGSS…GGSG). The segment covering 166-185 (SSGGGSSGGGSGGGGGGSGL) has biased composition (gly residues). The segment covering 231–240 (SSSSADAGSS) has biased composition (low complexity). Over residues 258 to 282 (STGGTGGSSGSSGGGSGGGGGGSGL) the composition is skewed to gly residues. Positions 326–358 (ANSVSSLAGSMSSSGSSSSSGSSGSSSSSSSSG) are enriched in low complexity. A compositionally biased stretch (gly residues) spans 359–382 (SSGGSSGGGSSGGGSGGGGGGSGL). The span at 433–452 (AGSSSSSGSSGSSSSSSSSG) shows a compositional bias: low complexity. A compositionally biased stretch (gly residues) spans 453-469 (SSGGSSGGSSGGGGGSG).

Belongs to the dictyostelium lysozyme family.

This is Putative lysozyme-like protein (alyL) from Dictyostelium discoideum (Social amoeba).